The sequence spans 24 residues: Bombinin (24 aa).

An Asparagine amide modification is found at asparagine 24.

This sequence belongs to the bombinin family. In terms of tissue distribution, expressed by the skin glands.

The protein resides in the secreted. Has antimicrobial and hemolytic activities. This Bombina variegata (Yellow-bellied toad) protein is Bombinin.